Reading from the N-terminus, the 187-residue chain is Elongation factor P (187 aa).

This sequence belongs to the elongation factor P family.

It is found in the cytoplasm. The protein operates within protein biosynthesis; polypeptide chain elongation. Its function is as follows. Involved in peptide bond synthesis. Stimulates efficient translation and peptide-bond synthesis on native or reconstituted 70S ribosomes in vitro. Probably functions indirectly by altering the affinity of the ribosome for aminoacyl-tRNA, thus increasing their reactivity as acceptors for peptidyl transferase. The protein is Elongation factor P of Corynebacterium diphtheriae (strain ATCC 700971 / NCTC 13129 / Biotype gravis).